The chain runs to 448 residues: Arginine synthetase ArcE (448 aa).

Probably forms homotetramers and higher assemblies of tetramers. Mg(2+) serves as cofactor.

The enzyme catalyses L-arginine + ADP + phosphate + H(+) = L-citrulline + NH4(+) + ATP. It functions in the pathway amino-acid biosynthesis; L-proline biosynthesis. It participates in amino-acid degradation; L-arginine degradation. Its pathway is amino-acid biosynthesis; L-arginine biosynthesis. Arginine deiminase involved in an arginine synthetase pathway, which provides citrulline and ornithine, the precursors for proline biosynthesis. Catalyzes the conversion of L-arginine to citrulline while conserving the energy of arginine deimination to generate ATP from ADP and free phosphate. Is specific toward L-arginine and cannot use D-arginine, agmatine, guanidine, L-alanine-L-arginine dipeptide and L-arginine-L-alanine dipeptide. Can also use CDP, GDP or UDP, with lower activity (38%, 8.4% and 13.3%, respectively). The enzyme can also catalyze the reverse reaction: the ATP-dependent generation of arginine from citrulline in a single reaction by using free ammonia, without the requirement of aspartic acid. In vivo, most likely functions in the arginine catabolism to produce citrulline for proline biosynthesis while also generating ATP, but it can also contribute to arginine biosynthesis when the necessary precursors such as citrulline are abundant. The polypeptide is Arginine synthetase ArcE (Thermococcus kodakarensis (strain ATCC BAA-918 / JCM 12380 / KOD1) (Pyrococcus kodakaraensis (strain KOD1))).